The chain runs to 463 residues: Phosphoglucosamine mutase (463 aa).

Serine 101 functions as the Phosphoserine intermediate in the catalytic mechanism. 4 residues coordinate Mg(2+): serine 101, aspartate 256, aspartate 258, and aspartate 260. Phosphoserine is present on serine 101.

This sequence belongs to the phosphohexose mutase family. Requires Mg(2+) as cofactor. In terms of processing, activated by phosphorylation.

It catalyses the reaction alpha-D-glucosamine 1-phosphate = D-glucosamine 6-phosphate. Catalyzes the conversion of glucosamine-6-phosphate to glucosamine-1-phosphate. This Desulforapulum autotrophicum (strain ATCC 43914 / DSM 3382 / VKM B-1955 / HRM2) (Desulfobacterium autotrophicum) protein is Phosphoglucosamine mutase.